Reading from the N-terminus, the 370-residue chain is Small ribosomal subunit biogenesis GTPase RsgA 1 (370 aa).

The CP-type G domain occupies 97–255 (QTQLDRPPIA…LADTPGFNQP (159 aa)). Residues 146-149 (NKSD) and 197-205 (GPSGVGKSS) contribute to the GTP site. Zn(2+) is bound by residues Cys280, Cys285, His287, and Cys293. Positions 325–370 (PESTLKLKTKGKGQSQYEPKLESKKYRRTSRRTQVQGLQDLYQEEE) are disordered.

Belongs to the TRAFAC class YlqF/YawG GTPase family. RsgA subfamily. In terms of assembly, monomer. Associates with 30S ribosomal subunit, binds 16S rRNA. The cofactor is Zn(2+).

The protein localises to the cytoplasm. Functionally, one of several proteins that assist in the late maturation steps of the functional core of the 30S ribosomal subunit. Helps release RbfA from mature subunits. May play a role in the assembly of ribosomal proteins into the subunit. Circularly permuted GTPase that catalyzes slow GTP hydrolysis, GTPase activity is stimulated by the 30S ribosomal subunit. This Nostoc sp. (strain PCC 7120 / SAG 25.82 / UTEX 2576) protein is Small ribosomal subunit biogenesis GTPase RsgA 1.